The chain runs to 587 residues: MAARSLMRILLVGLGLTLATIISGALVTISASATVCSSWPLCLEELVQSQNPLVWISLLHRLFVALALLAVFAGLVAVWRSSDTAGLPRITAGIAAAFFLLQALAGALLVWGVPAMVADVWHLSGALLAFGAQSLTIALIAVPTPATPERLAGRAAQMQRRLRSLAWWSAAAAGVAALAIGARSVVPGFGMMTAVPTNSVSAVGFAALLSVWMALEARRRLRPVAETPALALALPRYSLFLPALALLALLGAFIPVAGHLISLTAIALLWAATIIAAVILQRVPFSFATATAGVRSQPAWRTVVADYISLTKPKVISLLLVTTLTTMFITEAGLPSWWLVIWTMIGGYLAAGGAGAINCAFDSDIDINMGRTSRRPVPSGRISRRAAFIFGLILSVLSIIVLWVFTTPLAAFFALLGIIYYAWFYTGWLKRSTWQNIIIGGGAGAIPPLVGWTAVTGSVSLMAVVLFAIIFYWTPPHFWALALVKQKDYARAGVPMLPVVAGEAETRWQILVYSAIMVAVSLLPVAIGAMSWIYLIGAVVLGLRFMRDAWAVWRVGDQAAIWGLYKYSLLYLALVFAAMVADRLIIG.

The segment at 1 to 317 is unknown; that stretch reads MAARSLMRIL…ISLTKPKVIS (317 aa). Transmembrane regions (helical) follow at residues 9–29, 58–78, 93–113, 123–143, 172–192, 195–215, 238–258, 260–280, 315–335, 337–357, 386–406, 409–429, 437–457, 464–484, 522–542, and 560–580; these read ILLVGLGLTLATIISGALVTI, LLHRLFVALALLAVFAGLVAV, GIAAAFFLLQALAGALLVWGV, LSGALLAFGAQSLTIALIAVP, AAGVAALAIGARSVVPGFGMM, VPTNSVSAVGFAALLSVWMAL, SLFLPALALLALLGAFIPVAG, LISLTAIALLWAATIIAAVIL, VISLLLVTTLTTMFITEAGLP, WWLVIWTMIGGYLAAGGAGAI, AAFIFGLILSVLSIIVLWVFT, LAAFFALLGIIYYAWFYTGWL, IIIGGGAGAIPPLVGWTAVTG, VVLFAIIFYWTPPHFWALALV, LLPVAIGAMSWIYLIGAVVLG, and AIWGLYKYSLLYLALVFAAMV. Residues 318–587 are protoheme IX prenyltransferase; it reads LLLVTTLTTM…AMVADRLIIG (270 aa).

In the C-terminal section; belongs to the UbiA prenyltransferase family. Protoheme IX farnesyltransferase subfamily.

It is found in the cell membrane. It carries out the reaction heme b + (2E,6E)-farnesyl diphosphate + H2O = Fe(II)-heme o + diphosphate. It functions in the pathway porphyrin-containing compound metabolism; heme O biosynthesis; heme O from protoheme: step 1/1. Functionally, converts heme B (protoheme IX) to heme O by substitution of the vinyl group on carbon 2 of heme B porphyrin ring with a hydroxyethyl farnesyl side group. The polypeptide is Protoheme IX farnesyltransferase (ctaB) (Chloroflexus aurantiacus (strain ATCC 29366 / DSM 635 / J-10-fl)).